A 435-amino-acid polypeptide reads, in one-letter code: DMATS-type prenyltransferase fscG (435 aa).

Dimethylallyl diphosphate contacts are provided by Arg111, Lys193, Tyr195, Arg259, Lys261, Tyr263, Tyr352, and Tyr423.

This sequence belongs to the tryptophan dimethylallyltransferase family.

The protein operates within secondary metabolite biosynthesis. In terms of biological role, DMATS-type prenyltransferase; part of the fragmented gene cluster that mediates the biosynthesis of fusarochromene, a tryptophan-derived metabolite closely related to a group of mycotoxins including fusarochromanone. Within the pathway, fscG catalyzes the prenylation of the primary alcohol produced by fscA which is necessary for the formation of the chromene ring by the oxidoreductase fscI. The first step of the pathway is the epimerization of L-tryptophan to D-tryptophan in the presence of the NRPS-like tryptophan epimerase fscC. D-tryptophan is subsequently hydroxylated by the tryptophan 6-hydroxylase fscE to yield 6-hydroxytryptophan. The pyrrole ring undergoes cleavaged by the tryptophan 2,3-dioxygenase fscD and is finally converted to 4-hydroxykyrunenine by the hydrolase fscH. The NRPS-like oxidoreductase fscA reduces the carboxyl group to primary alcohol and the DMATS-type prenyltransferase fscG performs prenylation, followed by the formation of a chromene ring catalyzed by the oxidoreductase fscI, which leads to desacetylfusarochromene. Epoxidation by fscF and rearrangement reactions of chromene double bonds convert compound desacetylfusarochromene to fusarochromanones. Although specific acetyltransferases were not found near the fsc gene cluster, several predicted enzymes containing the N-acetyltransferase superfamily domain are present in the genome of F.equiseti. These predicted enzymes may have the potential to convert desacetylfusarochromene to fusarochromene. This Fusarium equiseti (Fusarium scirpi) protein is DMATS-type prenyltransferase fscG.